A 360-amino-acid polypeptide reads, in one-letter code: Peptide chain release factor 1 (360 aa).

At Gln-235 the chain carries N5-methylglutamine. The segment at 281 to 310 (AERQRQDAAQAESRRLQVGSGDRSQRIRTY) is disordered.

The protein belongs to the prokaryotic/mitochondrial release factor family. Post-translationally, methylated by PrmC. Methylation increases the termination efficiency of RF1.

Its subcellular location is the cytoplasm. Peptide chain release factor 1 directs the termination of translation in response to the peptide chain termination codons UAG and UAA. The sequence is that of Peptide chain release factor 1 from Stenotrophomonas maltophilia (strain K279a).